A 195-amino-acid polypeptide reads, in one-letter code: Small ribosomal subunit protein uS4c (195 aa).

The S4 RNA-binding domain maps to 82–143 (MRLDNILFRL…KQRSKALIQN (62 aa)).

Belongs to the universal ribosomal protein uS4 family. In terms of assembly, part of the 30S ribosomal subunit. Contacts protein S5. The interaction surface between S4 and S5 is involved in control of translational fidelity.

The protein localises to the plastid. Its subcellular location is the chloroplast. One of the primary rRNA binding proteins, it binds directly to 16S rRNA where it nucleates assembly of the body of the 30S subunit. Functionally, with S5 and S12 plays an important role in translational accuracy. The protein is Small ribosomal subunit protein uS4c (rps4) of Watsonia angusta.